A 97-amino-acid chain; its full sequence is ESAT-6-like protein EsxS (97 aa).

It belongs to the WXG100 family. CFP-10 subfamily. Forms a tight complex with EsxR. Exists in heterodimeric and heterotetrameric forms.

The protein localises to the secreted. In Mycobacterium tuberculosis (strain ATCC 25618 / H37Rv), this protein is ESAT-6-like protein EsxS.